Reading from the N-terminus, the 147-residue chain is MTIVCELESGADLPEYATEGASGADLRAHIEEPIAVLPGQRVLIPTGIKMQIPQGYEVQVRPRSGLALKHGIMVVNSPGTIDADYRGEVCIILANFGESTFIIEPKMRIAQAVVAPVVQAKFIVVDQEEGLTATSRGSRGFGHTGEK.

Substrate is bound by residues Arg-63–Gly-65, Asn-76, and Thr-80–Asp-82.

Belongs to the dUTPase family. It depends on Mg(2+) as a cofactor.

It catalyses the reaction dUTP + H2O = dUMP + diphosphate + H(+). Its pathway is pyrimidine metabolism; dUMP biosynthesis; dUMP from dCTP (dUTP route): step 2/2. Functionally, this enzyme is involved in nucleotide metabolism: it produces dUMP, the immediate precursor of thymidine nucleotides and it decreases the intracellular concentration of dUTP so that uracil cannot be incorporated into DNA. The protein is Deoxyuridine 5'-triphosphate nucleotidohydrolase of Chlamydia caviae (strain ATCC VR-813 / DSM 19441 / 03DC25 / GPIC) (Chlamydophila caviae).